Reading from the N-terminus, the 249-residue chain is Small ribosomal subunit protein uS2 (249 aa).

This sequence belongs to the universal ribosomal protein uS2 family.

The polypeptide is Small ribosomal subunit protein uS2 (Polynucleobacter asymbioticus (strain DSM 18221 / CIP 109841 / QLW-P1DMWA-1) (Polynucleobacter necessarius subsp. asymbioticus)).